A 209-amino-acid polypeptide reads, in one-letter code: Large ribosomal subunit protein uL3 (209 aa).

The interval 127-166 is disordered; sequence NFGGGQRTHGQSDRLRAPGSIGGASDPSKTFKGTKMGGRM.

This sequence belongs to the universal ribosomal protein uL3 family. In terms of assembly, part of the 50S ribosomal subunit. Forms a cluster with proteins L14 and L19.

One of the primary rRNA binding proteins, it binds directly near the 3'-end of the 23S rRNA, where it nucleates assembly of the 50S subunit. The sequence is that of Large ribosomal subunit protein uL3 from Chlorobium phaeovibrioides (strain DSM 265 / 1930) (Prosthecochloris vibrioformis (strain DSM 265)).